The chain runs to 248 residues: MDADAPAGYRDPSGRHGAVTLPARPEPVAFDADATVLIVVDMQNAYATKGGYLDLAGFDVSATGPVIERIARAVAAARAAGIRVVWFQNGWDPDYVEAGGPGSPNWHKSNALKTMRLRPQMNQRLLAKGTWDYALVDALTPEPGDIVLPKPRYSGFYNTPLDSMLRARGIRTLVFTGIATNVCVESTLRDGYHREYFGIVLADATHQAGPPALQEGALRNIETFFGWVSDVAAFEAALSSDEARRIPA.

The active-site Proton acceptor is Asp-41. The active site involves Lys-150. Cys-183 functions as the Nucleophile in the catalytic mechanism.

It belongs to the isochorismatase family. RutB subfamily.

It catalyses the reaction (Z)-3-ureidoacrylate + H2O + H(+) = (Z)-3-aminoacrylate + NH4(+) + CO2. The catalysed reaction is (Z)-3-ureidoacrylate + H2O = (Z)-3-aminoacrylate + carbamate + H(+). It carries out the reaction (Z)-2-methylureidoacrylate + H2O + H(+) = (Z)-2-methylaminoacrylate + NH4(+) + CO2. Functionally, hydrolyzes ureidoacrylate to form aminoacrylate and carbamate. The carbamate hydrolyzes spontaneously, thereby releasing one of the nitrogen atoms of the pyrimidine ring as ammonia and one of its carbon atoms as CO2. The sequence is that of Ureidoacrylate amidohydrolase RutB from Methylorubrum extorquens (strain ATCC 14718 / DSM 1338 / JCM 2805 / NCIMB 9133 / AM1) (Methylobacterium extorquens).